The chain runs to 314 residues: MNLNIITEKDKKQSYNLNKLQKRLRRNVGNAIADFNMIENGDKVMVCLSGGKDSYTLLDILLNLRLNAPIHFDIVAVNLDQKQPGFPEHILPEYLKSISVDYKIVAENTYGIVKEKIPEGKTTCSLCSRLRRGILYRTATELGATKIALGHHRDDMLETLFLNMFYGGKLKSMPPKLISDDGKQIVIRPLAYCKEKDIEKYAVAKQFPIIPCNLCGSQPNLQRQVVKEMLQKWDRQYPGRIETMFSAIQNIVPSHLCDSNLFDFKRIRHGKIPEGIEGDIAFDKEAFSPTPLVQENDEKIDFIQGEMISFKEVN.

Positions 49 to 54 match the PP-loop motif motif; that stretch reads SGGKDS. Residues cysteine 124, cysteine 127, and cysteine 215 each contribute to the [4Fe-4S] cluster site.

Belongs to the TtcA family. Homodimer. The cofactor is Mg(2+). It depends on [4Fe-4S] cluster as a cofactor.

Its subcellular location is the cytoplasm. The catalysed reaction is cytidine(32) in tRNA + S-sulfanyl-L-cysteinyl-[cysteine desulfurase] + AH2 + ATP = 2-thiocytidine(32) in tRNA + L-cysteinyl-[cysteine desulfurase] + A + AMP + diphosphate + H(+). Its pathway is tRNA modification. Its function is as follows. Catalyzes the ATP-dependent 2-thiolation of cytidine in position 32 of tRNA, to form 2-thiocytidine (s(2)C32). The sulfur atoms are provided by the cysteine/cysteine desulfurase (IscS) system. This is tRNA-cytidine(32) 2-sulfurtransferase from Histophilus somni (strain 129Pt) (Haemophilus somnus).